The chain runs to 224 residues: Response regulator protein GraR (224 aa).

Residues 2 to 115 enclose the Response regulatory domain; the sequence is QILLVEDDNT…VLIAKLQAIY (114 aa). Position 51 is a 4-aspartylphosphate (aspartate 51). The segment at residues 126–224 is a DNA-binding region (ompR/PhoB-type); the sequence is KRTLTWQDAI…KVGKGYMAHE (99 aa). Threonine 128, threonine 130, and threonine 149 each carry phosphothreonine.

In terms of assembly, interacts with GraX. In terms of processing, phosphorylated by GraS. Phosphorylated by Stk1; phosphorylation increases the DNA-binding activity of GraR.

It localises to the cytoplasm. Member of the two-component regulatory system GraR/GraS involved in resistance against cationic antimicrobial peptides (CAMPs). Upon phosphorylation by GraS, functions as a transcription regulator by direct binding to promoter regions of target genes such as adhesins, exoproteins, transporters, toxins, and proteins involved in cell wall synthesis. Down-regulates the expression of many genes involved in RNA and amino acid synthesis or glycolysis. This is Response regulator protein GraR (graR) from Staphylococcus aureus (strain bovine RF122 / ET3-1).